A 264-amino-acid chain; its full sequence is Sexual differentiation protein ste4 (264 aa).

An SAM domain is found at 11–73 (WNNEAVCNWI…LSAIQSMKKQ (63 aa)). Residues 111 to 139 (LEKRVEYLETENTKLVKTLNSLNSEFLQL) are leucine-zipper. The Ras-associating domain occupies 176 to 264 (GSFDLEVNDS…PSFVLSRRSC (89 aa)).

As to quaternary structure, homodimer or heterodimer with another leucine-zipper protein.

In terms of biological role, essential for mating and meiosis. This is Sexual differentiation protein ste4 (ste4) from Schizosaccharomyces pombe (strain 972 / ATCC 24843) (Fission yeast).